A 90-amino-acid polypeptide reads, in one-letter code: MQVEEMQEKVINLAQKYTNQKRFFRLIRKSNIAEKIIKEISEFYGIREDNIELFDNEIEFMFKKESVKLILKKQGNKLKIENIEMTKSIS.

This is an uncharacterized protein from Saccharolobus islandicus (Sulfolobus islandicus).